The chain runs to 392 residues: Norsolorinic acid reductase B (392 aa).

Aspartate 75 provides a ligand contact to NADP(+). Catalysis depends on tyrosine 80, which acts as the Proton donor. NADP(+) is bound by residues 184-185, glutamine 210, 239-249, and 311-319; these read SD, GTLGQGSFQTE, and RKLEHIQGN. A disordered region spans residues 242 to 263; it reads GQGSFQTEEGRKQREKDNPGRK. Over residues 249–261 the composition is skewed to basic and acidic residues; it reads EEGRKQREKDNPG.

This sequence belongs to the aldo/keto reductase family. Aldo/keto reductase 2 subfamily.

It functions in the pathway mycotoxin biosynthesis. Its function is as follows. Norsolorinic acid reductase; part of the fragmented gene cluster that mediates the biosynthesis of dothistromin (DOTH), a polyketide toxin very similar in structure to the aflatoxin precursor, versicolorin B. The first step of the pathway is the conversion of acetate to norsolorinic acid (NOR) and requires the fatty acid synthase subunits hexA and hexB, as well as the polyketide synthase pksA. PksA combines a hexanoyl starter unit and 7 malonyl-CoA extender units to synthesize the precursor NOR. The hexanoyl starter unit is provided to the acyl-carrier protein (ACP) domain by the fungal fatty acid synthase hexA/hexB. The second step is the conversion of NOR to averantin (AVN) and requires the norsolorinic acid ketoreductase nor1, which catalyzes the dehydration of norsolorinic acid to form (1'S)-averantin. The cytochrome P450 monooxygenase avnA then catalyzes the hydroxylation of AVN to 5'hydroxyaverantin (HAVN). The next step is performed by adhA that transforms HAVN to averufin (AVF). Averufin might then be converted to hydroxyversicolorone by cypX and avfA. Hydroxyversicolorone is further converted versiconal hemiacetal acetate (VHA) by moxY. VHA is then the substrate for the versiconal hemiacetal acetate esterase est1 to yield versiconal (VAL). Versicolorin B synthase vbsA then converts VAL to versicolorin B (VERB) by closing the bisfuran ring. Then, the activity of the versicolorin B desaturase verB leads to versicolorin A (VERA). DotB, a predicted chloroperoxidase, may perform epoxidation of the A-ring of VERA. Alternatively, a cytochrome P450, such as cypX or avnA could catalyze this step. It is also possible that another, uncharacterized, cytochrome P450 enzyme is responsible for this step. Opening of the epoxide could potentially be achieved by the epoxide hydrolase epoA. However, epoA seems not to be required for DOTH biosynthesis, but other epoxide hydrolases may have the ability to complement this hydrolysis. Alternatively, opening of the epoxide ring could be achieved non-enzymatically. The next step is the deoxygenation of ring A to yield the 5,8-dihydroxyanthraquinone which is most likely catalyzed by the NADPH dehydrogenase encoded by ver1. The last stages of DOTH biosynthesis are proposed to involve hydroxylation of the bisfuran. OrdB and norB might have oxidative roles here. An alternative possibility is that cytochrome P450 monoogenases such as avnA and cypX might perform these steps in addition to previously proposed steps. The sequence is that of Norsolorinic acid reductase B from Dothistroma septosporum (strain NZE10 / CBS 128990) (Red band needle blight fungus).